A 710-amino-acid chain; its full sequence is Tubulin polyglutamylase TTLL11 (710 aa).

Residues 41–135 form a disordered region; the sequence is VRVDAGAAGE…QRPVTVDSSK (95 aa). Residues 51 to 60 are compositionally biased toward basic and acidic residues; that stretch reads PECKAGEEQP. Low complexity predominate over residues 64–82; sequence APAPAQPSAAEEGNTQVLQ. Positions 83–93 are enriched in pro residues; that stretch reads RPPPTLPPSKP. Polar residues predominate over residues 123–135; sequence NGSQRPVTVDSSK. Positions 128–480 constitute a TTL domain; the sequence is PVTVDSSKAR…EVKVAVIRDT (353 aa). ATP is bound by residues K249, 255-256, 282-285, and 295-297; these read QG, QEYI, and KFD. Residue Q255 participates in a protein binding. Residue R321 participates in L-glutamate binding. 343–344 lines the ATP pocket; that stretch reads TN. Positions 345, 346, and 365 each coordinate L-glutamate. Mg(2+) contacts are provided by D428, E441, and N443. Residues 467–538 form a c-MTBD region region; that stretch reads LVDEEVKVAV…SICLKQVFPK (72 aa). K473 serves as a coordination point for L-glutamate. Residues 665–710 form a disordered region; it reads GVPSGGRPPHRGPPQEPSPSAQPAGDNPPPRTSCANKLSHPRHTLS.

The protein belongs to the tubulin--tyrosine ligase family. Requires Mg(2+) as cofactor.

The protein resides in the cytoplasm. Its subcellular location is the cytoskeleton. It is found in the cilium basal body. It carries out the reaction L-glutamyl-[protein] + L-glutamate + ATP = gamma-L-glutamyl-L-glutamyl-[protein] + ADP + phosphate + H(+). The catalysed reaction is (L-glutamyl)(n)-gamma-L-glutamyl-L-glutamyl-[protein] + L-glutamate + ATP = (L-glutamyl)(n+1)-gamma-L-glutamyl-L-glutamyl-[protein] + ADP + phosphate + H(+). Its function is as follows. Polyglutamylase which modifies tubulin, generating polyglutamate side chains of variable lengths on the gamma-carboxyl group of specific glutamate residues within the C-terminal tail of tubulin. Preferentially mediates ATP-dependent polyglutamate long side-chain elongation over the initiation step of the polyglutamylation reaction. Preferentially modifies the alpha-tubulin tail over a beta-tail. Required for CCSAP localization to both spindle and cilia microtubules. Promotes tubulin polyglutamylation which stimulates spastin/SPAST-mediated microtubule severing, thereby regulating microtubule functions. The polypeptide is Tubulin polyglutamylase TTLL11 (Homo sapiens (Human)).